Consider the following 180-residue polypeptide: Shikimate kinase (180 aa).

An ATP-binding site is contributed by 14–19 (GAGKSS). Ser-18 lines the Mg(2+) pocket. The substrate site is built by Asp-36, Arg-60, and Gly-82. Arg-120 lines the ATP pocket. Residue Arg-139 coordinates substrate.

It belongs to the shikimate kinase family. Monomer. Mg(2+) is required as a cofactor.

It is found in the cytoplasm. It catalyses the reaction shikimate + ATP = 3-phosphoshikimate + ADP + H(+). It functions in the pathway metabolic intermediate biosynthesis; chorismate biosynthesis; chorismate from D-erythrose 4-phosphate and phosphoenolpyruvate: step 5/7. Its function is as follows. Catalyzes the specific phosphorylation of the 3-hydroxyl group of shikimic acid using ATP as a cosubstrate. The protein is Shikimate kinase of Xylella fastidiosa (strain M23).